The sequence spans 131 residues: Torsin-1A-interacting protein 2, isoform IFRG15 (131 aa).

This is Torsin-1A-interacting protein 2, isoform IFRG15 (Tor1aip2) from Mus musculus (Mouse).